The chain runs to 147 residues: Ribosome-binding factor A (147 aa).

The disordered stretch occupies residues 127–147 (AAEARHAGEPDPYKTDRDDAE).

The protein belongs to the RbfA family. As to quaternary structure, monomer. Binds 30S ribosomal subunits, but not 50S ribosomal subunits or 70S ribosomes.

The protein resides in the cytoplasm. Functionally, one of several proteins that assist in the late maturation steps of the functional core of the 30S ribosomal subunit. Associates with free 30S ribosomal subunits (but not with 30S subunits that are part of 70S ribosomes or polysomes). Required for efficient processing of 16S rRNA. May interact with the 5'-terminal helix region of 16S rRNA. The chain is Ribosome-binding factor A from Nocardia farcinica (strain IFM 10152).